Consider the following 942-residue polypeptide: Valine--tRNA ligase (942 aa).

The 'HIGH' region signature appears at Pro-43 to His-53. The 'KMSKS' region signature appears at Lys-551–Ser-555. Lys-554 serves as a coordination point for ATP. A coiled-coil region spans residues Glu-876–Leu-942.

The protein belongs to the class-I aminoacyl-tRNA synthetase family. ValS type 1 subfamily. As to quaternary structure, monomer.

It is found in the cytoplasm. It catalyses the reaction tRNA(Val) + L-valine + ATP = L-valyl-tRNA(Val) + AMP + diphosphate. In terms of biological role, catalyzes the attachment of valine to tRNA(Val). As ValRS can inadvertently accommodate and process structurally similar amino acids such as threonine, to avoid such errors, it has a 'posttransfer' editing activity that hydrolyzes mischarged Thr-tRNA(Val) in a tRNA-dependent manner. This is Valine--tRNA ligase from Stenotrophomonas maltophilia (strain K279a).